The sequence spans 114 residues: Probable 4-amino-4-deoxy-L-arabinose-phosphoundecaprenol flippase subunit ArnE (114 aa).

2 helical membrane-spanning segments follow: residues 41-61 (GWLW…LLVL) and 68-88 (VAYP…HFVF). The region spanning 43–112 (LWLALFSLGL…VIGGVLLLSR (70 aa)) is the EamA domain.

This sequence belongs to the ArnE family. As to quaternary structure, heterodimer of ArnE and ArnF.

Its subcellular location is the cell inner membrane. It participates in bacterial outer membrane biogenesis; lipopolysaccharide biosynthesis. Its function is as follows. Translocates 4-amino-4-deoxy-L-arabinose-phosphoundecaprenol (alpha-L-Ara4N-phosphoundecaprenol) from the cytoplasmic to the periplasmic side of the inner membrane. This is Probable 4-amino-4-deoxy-L-arabinose-phosphoundecaprenol flippase subunit ArnE from Pseudomonas fluorescens (strain ATCC BAA-477 / NRRL B-23932 / Pf-5).